The primary structure comprises 211 residues: Receptor expression-enhancing protein 6 (211 aa).

2 consecutive transmembrane segments (helical) span residues 44 to 64 (LSLY…IGFV) and 89 to 109 (WVVY…LSWF). The interval 190–211 (AGPSTPLEADLKPSQTPQPKDK) is disordered. Positions 202 to 211 (PSQTPQPKDK) are enriched in polar residues.

Belongs to the DP1 family. As to quaternary structure, interacts with STX3. Interacts with clathrin. Expressed in circumvallate papillae and testis. Expressed in the retina. Isoform 1 is predominantly present in mature optic cups. Isoform 1 expression is confined to the cell body and inner segment of developing rod photoreceptor cells.

The protein resides in the endoplasmic reticulum membrane. The protein localises to the cytoplasmic vesicle. It is found in the clathrin-coated vesicle membrane. Required for correct function and survival of retinal photoreceptors. Required for retinal development. In rod photoreceptors, facilitates stability and/or trafficking of guanylate cyclases and is required to maintain endoplasmic reticulum and mitochondrial homeostasis. May play a role in clathrin-coated intracellular vesicle trafficking of proteins from the endoplasmic reticulum to the retinal rod plasma membrane. This Homo sapiens (Human) protein is Receptor expression-enhancing protein 6 (REEP6).